Reading from the N-terminus, the 249-residue chain is Type III pantothenate kinase (249 aa).

An ATP-binding site is contributed by 6-13 (DCGNSFIK). Substrate-binding positions include Tyr93 and 100-103 (GMDR). The active-site Proton acceptor is Asp102. Asp122 is a K(+) binding site. Position 125 (Thr125) interacts with ATP. Thr181 serves as a coordination point for substrate.

The protein belongs to the type III pantothenate kinase family. As to quaternary structure, homodimer. NH4(+) is required as a cofactor. Requires K(+) as cofactor.

The protein resides in the cytoplasm. It carries out the reaction (R)-pantothenate + ATP = (R)-4'-phosphopantothenate + ADP + H(+). It participates in cofactor biosynthesis; coenzyme A biosynthesis; CoA from (R)-pantothenate: step 1/5. Its function is as follows. Catalyzes the phosphorylation of pantothenate (Pan), the first step in CoA biosynthesis. This Pseudomonas putida (strain ATCC 700007 / DSM 6899 / JCM 31910 / BCRC 17059 / LMG 24140 / F1) protein is Type III pantothenate kinase.